The chain runs to 392 residues: MFGTATRPGATRALLLGSGELGKEVAIELQRFGIEVIAADRYADAPAMQVAHKAHVLDMLDGAALRALVNEVKPDLIIPELEAIATDTLAALEQEGVKVVPNARATQLTMNREGIRRLAAETLGLPTSPYHFAQSKEEFVAAVDTIGLPCVVKPVMSSSGKGQSVLRDLAKLDESWTHAQEGGRAGRGKVIVEGFVPFEYEITLLTVRAVDGIHFCQPIGHRQEDGDYRESWQPQAMSEQALARSKEVAAKVVEALGGYGLFGVELFIKGDEVWFSEVSPRPHDTGMVTLISQDLSEFALHVRAILGLPVGTITQYGPSASAVVLREGHSQDIRYQGIGEALALVPGAQLRLFGKPEIAGRRRLGVALARAEDCPTAVEQAKAVAARVDVLF.

Residues 20-21 (EL) and Glu-80 contribute to the N(1)-(5-phospho-beta-D-ribosyl)glycinamide site. ATP contacts are provided by residues Arg-112, Lys-153, 158 to 163 (SSGKGQ), 193 to 196 (EGFV), and Glu-201. Residues 117-306 (RLAAETLGLP…EFALHVRAIL (190 aa)) enclose the ATP-grasp domain. Mg(2+)-binding residues include Glu-265 and Glu-277. N(1)-(5-phospho-beta-D-ribosyl)glycinamide-binding positions include Asp-284, Lys-355, and 362–363 (RR).

Belongs to the PurK/PurT family. As to quaternary structure, homodimer.

It carries out the reaction N(1)-(5-phospho-beta-D-ribosyl)glycinamide + formate + ATP = N(2)-formyl-N(1)-(5-phospho-beta-D-ribosyl)glycinamide + ADP + phosphate + H(+). It participates in purine metabolism; IMP biosynthesis via de novo pathway; N(2)-formyl-N(1)-(5-phospho-D-ribosyl)glycinamide from N(1)-(5-phospho-D-ribosyl)glycinamide (formate route): step 1/1. Functionally, involved in the de novo purine biosynthesis. Catalyzes the transfer of formate to 5-phospho-ribosyl-glycinamide (GAR), producing 5-phospho-ribosyl-N-formylglycinamide (FGAR). Formate is provided by PurU via hydrolysis of 10-formyl-tetrahydrofolate. The sequence is that of Formate-dependent phosphoribosylglycinamide formyltransferase from Aeromonas hydrophila subsp. hydrophila (strain ATCC 7966 / DSM 30187 / BCRC 13018 / CCUG 14551 / JCM 1027 / KCTC 2358 / NCIMB 9240 / NCTC 8049).